The chain runs to 271 residues: 3-methyl-2-oxobutanoate hydroxymethyltransferase (271 aa).

2 residues coordinate Mg(2+): aspartate 53 and aspartate 92. 3-methyl-2-oxobutanoate contacts are provided by residues 53-54, aspartate 92, and lysine 120; that span reads DS. Glutamate 122 lines the Mg(2+) pocket. The active-site Proton acceptor is the glutamate 189.

It belongs to the PanB family. As to quaternary structure, homodecamer; pentamer of dimers. The cofactor is Mg(2+).

It localises to the cytoplasm. It catalyses the reaction 3-methyl-2-oxobutanoate + (6R)-5,10-methylene-5,6,7,8-tetrahydrofolate + H2O = 2-dehydropantoate + (6S)-5,6,7,8-tetrahydrofolate. The protein operates within cofactor biosynthesis; (R)-pantothenate biosynthesis; (R)-pantoate from 3-methyl-2-oxobutanoate: step 1/2. In terms of biological role, catalyzes the reversible reaction in which hydroxymethyl group from 5,10-methylenetetrahydrofolate is transferred onto alpha-ketoisovalerate to form ketopantoate. The chain is 3-methyl-2-oxobutanoate hydroxymethyltransferase from Burkholderia multivorans (strain ATCC 17616 / 249).